A 192-amino-acid polypeptide reads, in one-letter code: Ribosome maturation factor RimM (192 aa).

In terms of domain architecture, PRC barrel spans 115 to 189 (EGEYYLSDLI…RIEITPPKGL (75 aa)).

Belongs to the RimM family. Binds ribosomal protein uS19.

It localises to the cytoplasm. Its function is as follows. An accessory protein needed during the final step in the assembly of 30S ribosomal subunit, possibly for assembly of the head region. Essential for efficient processing of 16S rRNA. May be needed both before and after RbfA during the maturation of 16S rRNA. It has affinity for free ribosomal 30S subunits but not for 70S ribosomes. The protein is Ribosome maturation factor RimM of Acaryochloris marina (strain MBIC 11017).